A 117-amino-acid polypeptide reads, in one-letter code: Glycine cleavage system H-like protein (117 aa).

One can recognise a Lipoyl-binding domain in the interval 21–103; it reads IVRLGLSSRM…ESEGWFVVLQ (83 aa). N6-lipoyllysine is present on Lys-62.

Belongs to the GcvH family. The cofactor is (R)-lipoate.

This is Glycine cleavage system H-like protein from Chlamydia muridarum (strain MoPn / Nigg).